Here is a 125-residue protein sequence, read N- to C-terminus: Glycine cleavage system H protein (125 aa).

Positions 21–103 (SVTIGISNQA…YSAGWIVKIK (83 aa)) constitute a Lipoyl-binding domain. Lysine 62 bears the N6-lipoyllysine mark.

It belongs to the GcvH family. In terms of assembly, the glycine cleavage system is composed of four proteins: P, T, L and H. (R)-lipoate serves as cofactor.

In terms of biological role, the glycine cleavage system catalyzes the degradation of glycine. The H protein shuttles the methylamine group of glycine from the P protein to the T protein. This chain is Glycine cleavage system H protein, found in Psychromonas ingrahamii (strain DSM 17664 / CCUG 51855 / 37).